We begin with the raw amino-acid sequence, 76 residues long: MFMTSSCKPGNKVSMIWNSLTGKECKKISSMVVILPALTNLPSLVTGTHPFSSVFLGPLLFGRPLLRPPKPPLFCC.

This is an uncharacterized protein from Saccharomyces cerevisiae (strain ATCC 204508 / S288c) (Baker's yeast).